A 287-amino-acid polypeptide reads, in one-letter code: Probable ketose 3-epimerase (287 aa).

Catalysis depends on E152, which acts as the Proton donor/acceptor. E152 and D185 together coordinate Mn(2+). H188 serves as a coordination point for substrate. Mn(2+) is bound at residue H211. R217 serves as a coordination point for substrate. E246 serves as the catalytic Proton donor/acceptor. Residue E246 participates in Mn(2+) binding.

The protein belongs to the hyi family. It depends on Mn(2+) as a cofactor.

In terms of biological role, probably catalyzes the epimerization of ketopentoses and/or ketohexoses at the C3 position. The protein is Probable ketose 3-epimerase of Synechocystis sp. (strain ATCC 27184 / PCC 6803 / Kazusa).